Consider the following 188-residue polypeptide: Phosphoribosylglycinamide formyltransferase (188 aa).

Position 12–14 (12–14 (GSN)) interacts with N(1)-(5-phospho-beta-D-ribosyl)glycinamide. (6R)-10-formyltetrahydrofolate-binding positions include K66, 91 to 94 (MRLI), and N108. The active-site Proton donor is the H110.

Belongs to the GART family.

It catalyses the reaction N(1)-(5-phospho-beta-D-ribosyl)glycinamide + (6R)-10-formyltetrahydrofolate = N(2)-formyl-N(1)-(5-phospho-beta-D-ribosyl)glycinamide + (6S)-5,6,7,8-tetrahydrofolate + H(+). It participates in purine metabolism; IMP biosynthesis via de novo pathway; N(2)-formyl-N(1)-(5-phospho-D-ribosyl)glycinamide from N(1)-(5-phospho-D-ribosyl)glycinamide (10-formyl THF route): step 1/1. Catalyzes the transfer of a formyl group from 10-formyltetrahydrofolate to 5-phospho-ribosyl-glycinamide (GAR), producing 5-phospho-ribosyl-N-formylglycinamide (FGAR) and tetrahydrofolate. This is Phosphoribosylglycinamide formyltransferase from Staphylococcus aureus (strain MSSA476).